The sequence spans 156 residues: Nucleoredoxin-like protein 2 (156 aa).

The Thioredoxin domain maps to 9–147 (RLVTREGTVV…LACFQNWVEA (139 aa)).

The protein belongs to the nucleoredoxin family. As to expression, both isoforms are expressed in retina, in the photoreceptor layer, and throughout the olfactory sensory neuron layer of the nasal epithelium, in neurons. Also expressed at low levels in brain and testis.

Its function is as follows. May be involved in the maintenance of both the function and the viability of sensory neurons, including photoreceptors and olfactory neurons. In the retina, isoform 1 may be required for rod function and isoform 2 for cone viability and function. The chain is Nucleoredoxin-like protein 2 (Nxnl2) from Mus musculus (Mouse).